Reading from the N-terminus, the 94-residue chain is Selenoprotein K (94 aa).

The helical transmembrane segment at 20 to 42 (LSLITDFFWGIAEFVVLFFKTLL) threads the bilayer. The segment at 47–94 (KKGRGYRNSSDSRYDDGRGPPGNPPRRMGRISHLHGPSPPPMAGGUGR) is disordered. Position 92 (selenocysteine 92) is a non-standard amino acid, selenocysteine.

It belongs to the selenoprotein K family. In terms of assembly, interacts with DERL1, DERL2, DERL3 and SELENOS. The SELENOK-SELENOS complex interacts with VCP. Interacts with ZDHHC6. Post-translationally, cleaved by CAPN2/m-calpain in resting macrophages but not in activated macrophages. Macrophage activation up-regulates expression of the calpain inhibitor CAST/calpastatin, resulting in inhibition of CAPN2 activity. Truncated SELENOK proteins produced by failed UGA/Sec decoding are ubiquitinated by the CRL2(KLHDC2) complex, which recognizes the diglycine (Gly-Gly) at the C-terminus of truncated SELENOK proteins.

It localises to the endoplasmic reticulum membrane. The protein localises to the cell membrane. Functionally, required for Ca(2+) flux in immune cells and plays a role in T-cell proliferation and in T-cell and neutrophil migration. Involved in endoplasmic reticulum-associated degradation (ERAD) of soluble glycosylated proteins. Required for palmitoylation and cell surface expression of CD36 and involved in macrophage uptake of low-density lipoprotein and in foam cell formation. Together with ZDHHC6, required for palmitoylation of ITPR1 in immune cells, leading to regulate ITPR1 stability and function. Plays a role in protection of cells from ER stress-induced apoptosis. Protects cells from oxidative stress when overexpressed in cardiomyocytes. The sequence is that of Selenoprotein K from Chinchilla lanigera (Long-tailed chinchilla).